A 371-amino-acid polypeptide reads, in one-letter code: Queuine tRNA-ribosyltransferase (371 aa).

Asp89 functions as the Proton acceptor in the catalytic mechanism. Substrate is bound by residues 89–93, Asp143, Gln185, and Gly212; that span reads DSGGF. Positions 243 to 249 are RNA binding; that stretch reads GVGKPED. The Nucleophile role is filled by Asp262. Residues 267-271 are RNA binding; important for wobble base 34 recognition; sequence TRNAR. The Zn(2+) site is built by Cys300, Cys302, Cys305, and His331.

This sequence belongs to the queuine tRNA-ribosyltransferase family. Homodimer. Within each dimer, one monomer is responsible for RNA recognition and catalysis, while the other monomer binds to the replacement base PreQ1. Zn(2+) serves as cofactor.

It carries out the reaction 7-aminomethyl-7-carbaguanine + guanosine(34) in tRNA = 7-aminomethyl-7-carbaguanosine(34) in tRNA + guanine. The protein operates within tRNA modification; tRNA-queuosine biosynthesis. Catalyzes the base-exchange of a guanine (G) residue with the queuine precursor 7-aminomethyl-7-deazaguanine (PreQ1) at position 34 (anticodon wobble position) in tRNAs with GU(N) anticodons (tRNA-Asp, -Asn, -His and -Tyr). Catalysis occurs through a double-displacement mechanism. The nucleophile active site attacks the C1' of nucleotide 34 to detach the guanine base from the RNA, forming a covalent enzyme-RNA intermediate. The proton acceptor active site deprotonates the incoming PreQ1, allowing a nucleophilic attack on the C1' of the ribose to form the product. After dissociation, two additional enzymatic reactions on the tRNA convert PreQ1 to queuine (Q), resulting in the hypermodified nucleoside queuosine (7-(((4,5-cis-dihydroxy-2-cyclopenten-1-yl)amino)methyl)-7-deazaguanosine). The chain is Queuine tRNA-ribosyltransferase from Thioalkalivibrio sulfidiphilus (strain HL-EbGR7).